Consider the following 158-residue polypeptide: Rhombotin-2 (158 aa).

LIM zinc-binding domains follow at residues 30–89 (CGGC…RLFG) and 94–153 (CASC…EWTK).

Interacts with BEX2 and KDM5A. Interacts via its LIM domains with ELF2 and LDB1. Also interacts with basic helix-loop-helix protein TAL1/SCL and can assemble in a complex with LMO2 and TAL1/SCL. As to expression, expressed in early mouse development in central nervous system, lung, kidney, liver and spleen but only very low levels occur in thymus.

It is found in the nucleus. Functionally, acts with TAL1/SCL to regulate red blood cell development. Also acts with LDB1 to maintain erythroid precursors in an immature state. The chain is Rhombotin-2 (Lmo2) from Mus musculus (Mouse).